A 104-amino-acid chain; its full sequence is UPF0213 protein ORF82 (104 aa).

The 77-residue stretch at 7–83 folds into the GIY-YIG domain; that stretch reads KVWCVYIVRR…KRKRGKYFKL (77 aa).

The protein belongs to the UPF0213 family.

The sequence is that of UPF0213 protein ORF82 from Orgyia pseudotsugata (Douglas-fir tussock moth).